We begin with the raw amino-acid sequence, 155 residues long: 3-hydroxyacyl-[acyl-carrier-protein] dehydratase FabZ (155 aa).

Histidine 58 is a catalytic residue.

The protein belongs to the thioester dehydratase family. FabZ subfamily.

It is found in the cytoplasm. It carries out the reaction a (3R)-hydroxyacyl-[ACP] = a (2E)-enoyl-[ACP] + H2O. Involved in unsaturated fatty acids biosynthesis. Catalyzes the dehydration of short chain beta-hydroxyacyl-ACPs and long chain saturated and unsaturated beta-hydroxyacyl-ACPs. In Rhizobium leguminosarum bv. trifolii (strain WSM2304), this protein is 3-hydroxyacyl-[acyl-carrier-protein] dehydratase FabZ.